The sequence spans 91 residues: UPF0147 protein DKAM_0139 (91 aa).

The protein belongs to the UPF0147 family.

This is UPF0147 protein DKAM_0139 from Desulfurococcus amylolyticus (strain DSM 18924 / JCM 16383 / VKM B-2413 / 1221n) (Desulfurococcus kamchatkensis).